Consider the following 89-residue polypeptide: MEYQYPLDYDWSNEEMITVVKFYEAIERANEKGIVKEELMDLYRKFKQIVPSKAEEKKIDKEFQEVSGYSIYRTIQKGKDTEEHKIVKM.

This sequence belongs to the UPF0223 family.

This chain is UPF0223 protein Bcer98_2663, found in Bacillus cytotoxicus (strain DSM 22905 / CIP 110041 / 391-98 / NVH 391-98).